Here is a 148-residue protein sequence, read N- to C-terminus: Large ribosomal subunit protein bL9 (148 aa).

It belongs to the bacterial ribosomal protein bL9 family.

In terms of biological role, binds to the 23S rRNA. This is Large ribosomal subunit protein bL9 from Pseudomonas putida (strain ATCC 700007 / DSM 6899 / JCM 31910 / BCRC 17059 / LMG 24140 / F1).